The chain runs to 460 residues: UDP-N-acetylmuramoylalanine--D-glutamate ligase (460 aa).

117–123 (GTNGKTT) serves as a coordination point for ATP.

Belongs to the MurCDEF family.

The protein localises to the cytoplasm. The catalysed reaction is UDP-N-acetyl-alpha-D-muramoyl-L-alanine + D-glutamate + ATP = UDP-N-acetyl-alpha-D-muramoyl-L-alanyl-D-glutamate + ADP + phosphate + H(+). It participates in cell wall biogenesis; peptidoglycan biosynthesis. Functionally, cell wall formation. Catalyzes the addition of glutamate to the nucleotide precursor UDP-N-acetylmuramoyl-L-alanine (UMA). This chain is UDP-N-acetylmuramoylalanine--D-glutamate ligase, found in Prochlorococcus marinus (strain MIT 9313).